The sequence spans 94 residues: Adaptation to cold protein J (94 aa).

The J domain maps to 3-93 (NHFSVLGIKP…AMRELWDQFY (91 aa)). The interval 74–94 (NNVIVTDPNSAMRELWDQFYP) is essential for interaction with AtcC.

Interacts via its C-terminal extension with AtcC. Does not interact with AtcA and AtcB.

Its function is as follows. Involved in cold adaptation. The J-domain is functional and can stimulate the ATPase activity of the DnaK chaperone. May work as a co-chaperone of the DnaK system to support cold resistance. This is Adaptation to cold protein J from Shewanella oneidensis (strain ATCC 700550 / JCM 31522 / CIP 106686 / LMG 19005 / NCIMB 14063 / MR-1).